Here is a 161-residue protein sequence, read N- to C-terminus: Transcription antitermination protein NusB (161 aa).

This sequence belongs to the NusB family.

Involved in transcription antitermination. Required for transcription of ribosomal RNA (rRNA) genes. Binds specifically to the boxA antiterminator sequence of the ribosomal RNA (rrn) operons. This Nitrobacter winogradskyi (strain ATCC 25391 / DSM 10237 / CIP 104748 / NCIMB 11846 / Nb-255) protein is Transcription antitermination protein NusB.